A 124-amino-acid polypeptide reads, in one-letter code: Holo-[acyl-carrier-protein] synthase (124 aa).

Residues Asp-8 and Glu-56 each contribute to the Mg(2+) site.

The protein belongs to the P-Pant transferase superfamily. AcpS family. Mg(2+) is required as a cofactor.

It localises to the cytoplasm. The enzyme catalyses apo-[ACP] + CoA = holo-[ACP] + adenosine 3',5'-bisphosphate + H(+). In terms of biological role, transfers the 4'-phosphopantetheine moiety from coenzyme A to a Ser of acyl-carrier-protein. This is Holo-[acyl-carrier-protein] synthase from Nitratidesulfovibrio vulgaris (strain DP4) (Desulfovibrio vulgaris).